Here is a 442-residue protein sequence, read N- to C-terminus: D-serine dehydratase (442 aa).

Lysine 118 carries the post-translational modification N6-(pyridoxal phosphate)lysine.

The protein belongs to the serine/threonine dehydratase family. DsdA subfamily. In terms of assembly, monomer. Pyridoxal 5'-phosphate is required as a cofactor.

The catalysed reaction is D-serine = pyruvate + NH4(+). This Shigella sonnei (strain Ss046) protein is D-serine dehydratase.